Reading from the N-terminus, the 79-residue chain is Sec-independent protein translocase protein TatA (79 aa).

Residues 1 to 21 traverse the membrane as a helical segment; sequence MGSLSIWHWLIVLLIVALVFG. The tract at residues 46 to 79 is disordered; sequence ADAPAAEAQQRELPRNGAVDVEAKEKTPRSGDYR. Residues 66–79 are compositionally biased toward basic and acidic residues; sequence VEAKEKTPRSGDYR.

This sequence belongs to the TatA/E family. The Tat system comprises two distinct complexes: a TatABC complex, containing multiple copies of TatA, TatB and TatC subunits, and a separate TatA complex, containing only TatA subunits. Substrates initially bind to the TatABC complex, which probably triggers association of the separate TatA complex to form the active translocon.

It is found in the cell inner membrane. Part of the twin-arginine translocation (Tat) system that transports large folded proteins containing a characteristic twin-arginine motif in their signal peptide across membranes. TatA could form the protein-conducting channel of the Tat system. In Paraburkholderia phytofirmans (strain DSM 17436 / LMG 22146 / PsJN) (Burkholderia phytofirmans), this protein is Sec-independent protein translocase protein TatA.